The following is a 119-amino-acid chain: Movement protein TGB2 (119 aa).

Residues M1 to K13 lie on the Cytoplasmic side of the membrane. The helical transmembrane segment at Y14–N34 threads the bilayer. The Lumenal portion of the chain corresponds to Q35–T79. The helical transmembrane segment at F80 to F100 threads the bilayer. The Cytoplasmic segment spans residues T101–G119.

This sequence belongs to the virgaviridae/benyvirus TGB2 movement protein family. In terms of assembly, interacts with movement protein TGB3. TGB1-TGB3-TGB2 complex formation is enhanced by ATP hydrolysis.

It localises to the host cell junction. It is found in the host plasmodesma. The protein localises to the host endoplasmic reticulum membrane. The protein resides in the host cytoplasm. Its subcellular location is the host cytoskeleton. It localises to the host chloroplast envelope. Participates in the transport of viral genome to neighboring plant cells directly through plasmodesmata, without any budding. TGBp2 and TGBp3 are necessary for intracellular delivery of TGBp1-containing vRNPs to plasmodesmata. Can gate plasmodesmata and increase their size exclusion limit. To a lesser extent than TGB3, induces host actin cytoskeleton network thickening, which probably plays a major role in virus cell-to-cell movement. Binds ssRNA in a sequence non-specific manner. This is Movement protein TGB2 from Potato mop-top virus (isolate Potato/Sweden/Sw) (PMTV).